The following is a 263-amino-acid chain: ATP synthase subunit a (263 aa).

6 consecutive transmembrane segments (helical) span residues 26 to 46 (VHLDTLFFSLVAGATFLFFFS), 86 to 106 (VAPLALTVFCWVFVMNAIDLI), 130 to 150 (DISATLGMAICVFCLIIFYTI), 166 to 186 (PFNHWAFIPVNFVLEIVTLLA), 195 to 215 (LFGNMYAGELIFILIAVMYMA), and 229 to 249 (LAWAIFHILVITLQAFIFMML).

This sequence belongs to the ATPase A chain family. As to quaternary structure, F-type ATPases have 2 components, CF(1) - the catalytic core - and CF(0) - the membrane proton channel. CF(1) has five subunits: alpha(3), beta(3), gamma(1), delta(1), epsilon(1). CF(0) has three main subunits: a(1), b(2) and c(9-12). The alpha and beta chains form an alternating ring which encloses part of the gamma chain. CF(1) is attached to CF(0) by a central stalk formed by the gamma and epsilon chains, while a peripheral stalk is formed by the delta and b chains.

It is found in the cell inner membrane. Key component of the proton channel; it plays a direct role in the translocation of protons across the membrane. The polypeptide is ATP synthase subunit a (Glaesserella parasuis serovar 5 (strain SH0165) (Haemophilus parasuis)).